Reading from the N-terminus, the 883-residue chain is Aldehyde-alcohol dehydrogenase (883 aa).

Residues 13 to 456 are aldehyde dehydrogenase; the sequence is KLVAEKHVDE…DNVSAINLLN (444 aa). NAD(+) contacts are provided by residues 121–126, Gly-206, and Gly-224; that span reads ITPTTN. Cys-257 serves as the catalytic Nucleophile. NAD(+) is bound by residues Glu-355, Leu-435, and 438–443; that span reads GSYGRN. The segment at 457 to 464 is linker; sequence IKKVGRRR. Residues Asp-500, Asp-534, 561 to 565, 612 to 613, Val-625, Lys-634, and Leu-653 each bind NAD(+); these read GSPMD and TT. Fe cation-binding residues include Asp-668, His-672, His-736, and His-750.

It in the N-terminal section; belongs to the aldehyde dehydrogenase family. The protein in the C-terminal section; belongs to the iron-containing alcohol dehydrogenase family. Fe(2+) is required as a cofactor.

It catalyses the reaction an aldehyde + NAD(+) + H2O = a carboxylate + NADH + 2 H(+). The enzyme catalyses ethanol + NAD(+) = acetaldehyde + NADH + H(+). Functionally, has alcohol dehydrogenase activity. Has aldehyde dehydrogenase activity. Plays a role in enhancing virulence in mice, under ethanol stress conditions, perhaps by inducing expression of pneumolysin (Ply) and increasing production of hydrogen peroxide H(2)O(2). May be considered a potential virulence factor. This is Aldehyde-alcohol dehydrogenase from Streptococcus pneumoniae serotype 2 (strain D39 / NCTC 7466).